Reading from the N-terminus, the 157-residue chain is Protein E6 (157 aa).

2 zinc fingers span residues 41–77 and 114–150; these read CNFCGKFLDYLEACEFEVKKLSLIWKDYCVFACCRVC and CQTCLAFLDIIEKLDCCGRGLPFHRVRNAWKGICRQC.

The protein belongs to the papillomaviridae E6 protein family. Forms homodimers. Interacts with ubiquitin-protein ligase UBE3A/E6-AP; this interaction stimulates UBE3A ubiquitin activity. Interacts with host BAK1.

The protein resides in the host cytoplasm. The protein localises to the host nucleus. Plays a major role in the induction and maintenance of cellular transformation. E6 associates with host UBE3A/E6-AP ubiquitin-protein ligase and modulates its activity. Protects host keratinocytes from apoptosis by mediating the degradation of host BAK1. May also inhibit host immune response. In Human papillomavirus 36, this protein is Protein E6.